Reading from the N-terminus, the 142-residue chain is MALAAADRATVRALWKKMGSNVGVYATEALERMFLGFPSTTTYFLHLDLSLGSTQVKAHGQKVADALTLAVEHLEDLPRALSALRHRHVRELRVDPASFQLLGHCLLVTPARHFPGDFSPTLHASLVKFLSHVISALASDCR.

The region spanning 2–142 is the Globin domain; sequence ALAAADRATV…VISALASDCR (141 aa). Residues His-59 and His-88 each coordinate heme b.

The protein belongs to the globin family.

The polypeptide is Hemoglobin subunit theta-1 (HBQ1) (Equus caballus (Horse)).